A 93-amino-acid chain; its full sequence is Islet amyloid polypeptide (93 aa).

Residues 1 to 23 form the signal peptide; that stretch reads MMCISKLPAVLLILSVALNHLRA. Residues 24 to 35 constitute a propeptide that is removed on maturation; sequence TPVRSGSNPQMD. Cysteine 39 and cysteine 44 are joined by a disulfide. Positions 64-93 are disordered; that stretch reads LPPTNVGSNTYGKRNAAGDPNRESLDFLLV. A Tyrosine amide modification is found at tyrosine 74. Positions 78–93 are excised as a propeptide; the sequence is NAAGDPNRESLDFLLV. The segment covering 83–93 has biased composition (basic and acidic residues); the sequence is PNRESLDFLLV.

The protein belongs to the calcitonin family. In terms of assembly, can form homodimers. Interacts with IDE and INS. Interaction with INS inhibits homodimerization and fibril formation.

The protein localises to the secreted. In terms of biological role, amylin/IAPP is a glucoregulatory peptide hormone that plays an important role in the regulation of energy homeostasis. Selectively inhibits insulin-stimulated glucose utilization and glycogen deposition in muscle, while not affecting adipocyte glucose metabolism. IAPP function is mediated by the CALCR-RAMPs (AMYRs) receptor complexes. Amylin can also bind CALCR receptor in the absence of RAMPs, although it is more selective for AMYRs. The protein is Islet amyloid polypeptide of Mus musculus (Mouse).